The primary structure comprises 92 residues: Small ribosomal subunit protein uS19c (92 aa).

The protein belongs to the universal ribosomal protein uS19 family.

The protein resides in the plastid. The protein localises to the chloroplast. In terms of biological role, protein S19 forms a complex with S13 that binds strongly to the 16S ribosomal RNA. The chain is Small ribosomal subunit protein uS19c from Morus indica (Mulberry).